The primary structure comprises 354 residues: Protein OPG055 (354 aa).

Belongs to the orthopoxvirus OPG055 family.

Functionally, stimulates increases in peripheral microtubule dynamics and may increase the motility of the infected cells, contributing to cell-to-cell spread of the virus. Seems to inhibit the signaling via the GTPase RHOA and DIAPH1/mDia. The sequence is that of Protein OPG055 (OPG055) from Homo sapiens (Human).